A 90-amino-acid chain; its full sequence is Small ribosomal subunit protein bS20 (90 aa).

It belongs to the bacterial ribosomal protein bS20 family.

Functionally, binds directly to 16S ribosomal RNA. The sequence is that of Small ribosomal subunit protein bS20 from Francisella tularensis subsp. tularensis (strain FSC 198).